We begin with the raw amino-acid sequence, 393 residues long: Protein TsgA (393 aa).

Helical transmembrane passes span 11–31 (WISF…GMVM), 51–71 (FLNA…EIVP), 78–98 (FGFI…SLAL), 101–121 (AAMF…TFLI), 134–154 (LLFT…VAAF), 162–182 (WYWV…LTFG), 206–226 (IGVL…LGFI), 245–265 (ALVS…SFIL), 273–293 (ILTV…TGTQ), 298–318 (WFIL…ITLG), 332–352 (FILT…GPIV), and 361–381 (LLTA…LGFV).

Belongs to the major facilitator superfamily. TsgA family.

The protein resides in the cell inner membrane. In Salmonella dublin (strain CT_02021853), this protein is Protein TsgA.